The following is a 70-amino-acid chain: Large ribosomal subunit protein uL29 (70 aa).

It belongs to the universal ribosomal protein uL29 family.

The protein is Large ribosomal subunit protein uL29 of Symbiobacterium thermophilum (strain DSM 24528 / JCM 14929 / IAM 14863 / T).